Consider the following 209-residue polypeptide: Small ribosomal subunit protein uS4 (209 aa).

The disordered stretch occupies residues 22–45 (RGRNPLLRKPNPPGQHGMQRKKKS). An S4 RNA-binding domain is found at 93–154 (CRLDNIVYRL…KSKRLAIVTE (62 aa)).

It belongs to the universal ribosomal protein uS4 family. In terms of assembly, part of the 30S ribosomal subunit. Contacts protein S5. The interaction surface between S4 and S5 is involved in control of translational fidelity.

One of the primary rRNA binding proteins, it binds directly to 16S rRNA where it nucleates assembly of the body of the 30S subunit. In terms of biological role, with S5 and S12 plays an important role in translational accuracy. This Chlamydia trachomatis serovar A (strain ATCC VR-571B / DSM 19440 / HAR-13) protein is Small ribosomal subunit protein uS4.